The primary structure comprises 415 residues: YDG domain-containing protein At5g47160 (415 aa).

The disordered stretch occupies residues 163–186; the sequence is KKLSNASRLRANAHRPTQHKDERR. The 146-residue stretch at 262–407 folds into the YDG domain; sequence GSVPGIKVGD…NILFKFKLRR (146 aa).

Its subcellular location is the nucleus. The polypeptide is YDG domain-containing protein At5g47160 (Arabidopsis thaliana (Mouse-ear cress)).